The sequence spans 238 residues: Large ribosomal subunit protein uL3 (238 aa).

2 disordered regions span residues 140–164 (SHRS…KMPG) and 212–238 (LPKE…QEGA). Gln151 is subject to N5-methylglutamine. A compositionally biased stretch (low complexity) spans 225-238 (AGGEAEAAAQQEGA).

The protein belongs to the universal ribosomal protein uL3 family. In terms of assembly, part of the 50S ribosomal subunit. Forms a cluster with proteins L14 and L19. Methylated by PrmB.

In terms of biological role, one of the primary rRNA binding proteins, it binds directly near the 3'-end of the 23S rRNA, where it nucleates assembly of the 50S subunit. The chain is Large ribosomal subunit protein uL3 from Bradyrhizobium diazoefficiens (strain JCM 10833 / BCRC 13528 / IAM 13628 / NBRC 14792 / USDA 110).